The chain runs to 1415 residues: Bridge-like lipid transfer protein family member 3B (1415 aa).

The Chorein N-terminal domain occupies 3-94 (GLIKKQILKH…DKVIMEMSTC (92 aa)). 2 disordered regions span residues 267-300 (STEQ…STTP) and 882-904 (KSPL…SEGV). Residues 275–300 (ASETTQSPTPPVSSQQVKNPQTSTTP) are compositionally biased toward polar residues. A coiled-coil region spans residues 1367-1404 (KAAGISKEQLVEENECLKQELAKTKMALAESHMERDRL).

The protein localises to the cytoplasm. It is found in the cytosol. It localises to the early endosome. Functionally, tube-forming lipid transport protein which mediates the transfer of lipids between membranes at organelle contact sites. Required for retrograde traffic of vesicle clusters in the early endocytic pathway to the Golgi complex. The protein is Bridge-like lipid transfer protein family member 3B (bltp3b) of Xenopus laevis (African clawed frog).